The primary structure comprises 136 residues: Large ribosomal subunit protein uL22 (136 aa).

This sequence belongs to the universal ribosomal protein uL22 family. Part of the 50S ribosomal subunit.

Its function is as follows. This protein binds specifically to 23S rRNA; its binding is stimulated by other ribosomal proteins, e.g. L4, L17, and L20. It is important during the early stages of 50S assembly. It makes multiple contacts with different domains of the 23S rRNA in the assembled 50S subunit and ribosome. In terms of biological role, the globular domain of the protein is located near the polypeptide exit tunnel on the outside of the subunit, while an extended beta-hairpin is found that lines the wall of the exit tunnel in the center of the 70S ribosome. This is Large ribosomal subunit protein uL22 from Bacteroides thetaiotaomicron (strain ATCC 29148 / DSM 2079 / JCM 5827 / CCUG 10774 / NCTC 10582 / VPI-5482 / E50).